The chain runs to 811 residues: Endothelin-converting enzyme 2 (811 aa).

At methionine 1–glutamate 106 the chain is on the cytoplasmic side. The segment at leucine 22–arginine 64 is disordered. Residues leucine 107–leucine 127 form a helical; Signal-anchor for type II membrane protein membrane-spanning segment. Over glycine 128–tryptophan 811 the chain is Lumenal. The region spanning threonine 139–tryptophan 811 is the Peptidase M13 domain. Cystine bridges form between cysteine 140–cysteine 145, cysteine 163–cysteine 796, cysteine 171–cysteine 756, cysteine 227–cysteine 476, and cysteine 685–cysteine 808. N-linked (GlcNAc...) asparagine glycans are attached at residues asparagine 207, asparagine 211, asparagine 252, asparagine 312, asparagine 357, asparagine 424, and asparagine 580. Position 648 (histidine 648) interacts with Zn(2+). Glutamate 649 is an active-site residue. Histidine 652 is a Zn(2+) binding site. N-linked (GlcNAc...) asparagine glycosylation is found at asparagine 673 and asparagine 681. Position 708 (glutamate 708) interacts with Zn(2+). Residue aspartate 712 is the Proton donor of the active site.

It belongs to the peptidase M13 family. Zn(2+) serves as cofactor.

It localises to the golgi apparatus membrane. It is found in the cytoplasmic vesicle. Its subcellular location is the secretory vesicle membrane. It carries out the reaction Hydrolysis of the 21-Trp-|-Val-22 bond in big endothelin to form endothelin 1.. Functionally, converts big endothelin-1 to endothelin-1. Also involved in the processing of various neuroendocrine peptides, including neurotensin, angiotensin I, substance P, proenkephalin-derived peptides, and prodynorphin-derived peptides. May play a role in amyloid-beta processing. In Homo sapiens (Human), this protein is Endothelin-converting enzyme 2.